Consider the following 191-residue polypeptide: UPF0312 protein PA0423 (191 aa).

The first 23 residues, 1 to 23 (MLKKTLAALALGSALFTAGQAMA), serve as a signal peptide directing secretion.

Belongs to the UPF0312 family. Type 1 subfamily.

It localises to the periplasm. The polypeptide is UPF0312 protein PA0423 (Pseudomonas aeruginosa (strain ATCC 15692 / DSM 22644 / CIP 104116 / JCM 14847 / LMG 12228 / 1C / PRS 101 / PAO1)).